Consider the following 477-residue polypeptide: Tripartite motif-containing protein 72 (477 aa).

Zn(2+) contacts are provided by cysteine 14, cysteine 17, cysteine 29, histidine 31, cysteine 34, cysteine 37, cysteine 53, cysteine 56, cysteine 86, histidine 89, cysteine 97, aspartate 100, cysteine 105, cysteine 108, histidine 114, and histidine 117. Residues 14–57 form an RING-type zinc finger; sequence CPLCLQLFDAPVTAECGHSFCRACLIRVAGEPADDGTVACPCCQ. The B box-type zinc-finger motif lies at 81 to 122; it reads VPQGHCEEHLDPLSIYCEQDRTLVCGVCASLGSHRGHRLLPA. Positions 135-232 form a coiled coil; sequence QQKAQLQEAC…EKVLEEVADK (98 aa). S-nitrosocysteine is present on cysteine 144. Residue serine 255 is modified to Phosphoserine. One can recognise a B30.2/SPRY domain in the interval 271 to 475; the sequence is DFKFQVWKKM…PLLLVGPDSE (205 aa).

This sequence belongs to the TRIM/RBCC family. Homodimer. Homooligomer; disulfide-linked. Oligomerizes on the phospholipid membrane. Interacts with DYSF and CAV3. In terms of processing, disulfide bond formation at Cys-242 occurs in case of membrane damage that cause the entry of the oxidized milieu of the extracellular space, resulting in homooligomerization. S-nitrosylation at Cys-144 stabilizes TRIM72 and protects against oxidation-induced protein degradation and cell death.

It is found in the cell membrane. It localises to the sarcolemma. The protein resides in the cytoplasmic vesicle membrane. The catalysed reaction is S-ubiquitinyl-[E2 ubiquitin-conjugating enzyme]-L-cysteine + [acceptor protein]-L-lysine = [E2 ubiquitin-conjugating enzyme]-L-cysteine + N(6)-ubiquitinyl-[acceptor protein]-L-lysine.. The protein operates within protein modification; protein ubiquitination. Its activity is regulated as follows. Specifically binds phosphatidylserine. The binding to phospholipids enhances ubiquitination activity. Muscle-specific E3 ubiquitin-protein ligase that plays a central role in cell membrane repair by nucleating the assembly of the repair machinery at injury sites. Its ubiquitination activity is mediated by E2 ubiquitin-conjugating enzymes UBE2D1, UBE2D2 and UBE2D3. Acts as a sensor of oxidation: upon membrane damage, entry of extracellular oxidative environment results in disulfide bond formation and homooligomerization at the injury site. This oligomerization acts as a nucleation site for recruitment of TRIM72-containing vesicles to the injury site, leading to membrane patch formation. Probably acts upstream of the Ca(2+)-dependent membrane resealing process. Required for transport of DYSF to sites of cell injury during repair patch formation. Regulates membrane budding and exocytosis. May be involved in the regulation of the mobility of KCNB1-containing endocytic vesicles. The polypeptide is Tripartite motif-containing protein 72 (Rattus norvegicus (Rat)).